Reading from the N-terminus, the 112-residue chain is MAAALARLGLRPVKQVRVQFCPFEKNVESTRTFLQAVSSEKVRSTNLNCPVIADVRHDGSEPCVDVLFGDGYRLIMRGAHLTALEMLTAFASHIRARDAAGSGDKPGADTGR.

Belongs to the mitochondrion-specific ribosomal protein mL53 family. Component of the mitochondrial ribosome large subunit (39S) which comprises a 16S rRNA and about 50 distinct proteins.

Its subcellular location is the mitochondrion. The chain is Large ribosomal subunit protein mL53 (MRPL53) from Pongo abelii (Sumatran orangutan).